A 665-amino-acid chain; its full sequence is Sodium-dependent phosphate transporter 1-B (665 aa).

The next 6 helical transmembrane spans lie at 26-46 (YMWL…SVGA), 67-87 (ACIL…AKVS), 107-127 (LMAG…AASF), 163-183 (IVAS…VLFY), 202-222 (ALPF…MFTG), and 235-255 (GVLL…WFAV). 2 disordered regions span residues 294-345 (VPEE…APKT) and 423-442 (ESEF…AQER). Low complexity predominate over residues 296–306 (EESSVLSSSTP). Residues 329–338 (ADQKDCKESD) show a composition bias toward basic and acidic residues. Helical transmembrane passes span 499-519 (VSML…FAHG), 548-568 (TPIW…WVWG), 588-608 (FSIE…GLPV), and 638-658 (IFMA…AIMA).

This sequence belongs to the inorganic phosphate transporter (PiT) (TC 2.A.20) family.

The protein resides in the membrane. Sodium-phosphate symporter which plays a fundamental housekeeping role in phosphate transport. The protein is Sodium-dependent phosphate transporter 1-B (slc20a1b) of Danio rerio (Zebrafish).